A 130-amino-acid polypeptide reads, in one-letter code: Cysteine methyltransferase (130 aa).

It catalyses the reaction [trehalose-6-phosphate synthase]-L-cysteine + S-adenosyl-L-methionine = [trehalose-6-phosphate synthase]-S-methyl-L-cysteine + S-adenosyl-L-homocysteine + H(+). S-adenosyl-L-methionine-dependent protein-cysteine S-methyltransferase with broad substrate specificity. Methylates trehalose-6-phosphate synthase (TPS), enhancing its enzymatic activity and promoting trehalose synthesis upon entry of cells into stationary phase. This is Cysteine methyltransferase from Saccharomyces cerevisiae (Baker's yeast).